The chain runs to 457 residues: MNAKDVISRLPDEVLGRILSLISTKEAVSTSVLSKRWKNMFVLVSNLDIDDRQSVPKTKQNRIEIHRNYMAFVDKLLDTQRGSSIKKLTLKSHVGVRGGTDSSRIQSWICNVLDHGVMDLDVFITLKGKSPPVPAMIFKSKTLVKLRVGRGFTIKLSQDVSLPLLRTLCLDSVNFVGGHNVVGTLISRCPVLEELVVEERRCVDWTCSVSSPSLKRLHIRFDRKFTSISLDAPNLIYYKHSGYVLGKYPNVKLDSLIEARLNLRMDETRMVGVRNGSLGSIPADMRNLINGIRNVRILHLSSHTLELLYFSCKEMPLFDSLVSLSIGNDKARGWQMLPLLIKNSPNLETLIFMGLDHYITNRCGDVCVCYDTDESITSCLSSSQVKVLEILSYQGTTRELNQMKHFLEKLPCLELVKICVVNNSNNLQTTMEMRNLMMLPRASSKCKIQVKVLTKNN.

The F-box domain occupies 4-50 (KDVISRLPDEVLGRILSLISTKEAVSTSVLSKRWKNMFVLVSNLDID). LRR repeat units lie at residues 265-288 (MDETRMVGVRNGSLGSIPADMRNL), 292-315 (IRNVRILHLSSHTLELLYFSCKEM), and 318-343 (FDSLVSLSIGNDKARGWQMLPLLIKN).

This chain is F-box/LRR-repeat protein At2g42730, found in Arabidopsis thaliana (Mouse-ear cress).